Consider the following 64-residue polypeptide: uncharacterized protein (64 aa).

This is an uncharacterized protein from Bacillus subtilis (strain 168).